A 461-amino-acid polypeptide reads, in one-letter code: NADP-specific glutamate dehydrogenase (461 aa).

Lys115 is an active-site residue.

This sequence belongs to the Glu/Leu/Phe/Val dehydrogenases family. As to quaternary structure, homohexamer.

The enzyme catalyses L-glutamate + NADP(+) + H2O = 2-oxoglutarate + NH4(+) + NADPH + H(+). The sequence is that of NADP-specific glutamate dehydrogenase (GDH) from Penicillium chrysogenum (Penicillium notatum).